We begin with the raw amino-acid sequence, 418 residues long: Light-independent protochlorophyllide reductase subunit N (418 aa).

Cys17, Cys42, and Cys103 together coordinate [4Fe-4S] cluster.

It belongs to the BchN/ChlN family. Protochlorophyllide reductase is composed of three subunits; ChlL, ChlN and ChlB. Forms a heterotetramer of two ChlB and two ChlN subunits. It depends on [4Fe-4S] cluster as a cofactor.

It carries out the reaction chlorophyllide a + oxidized 2[4Fe-4S]-[ferredoxin] + 2 ADP + 2 phosphate = protochlorophyllide a + reduced 2[4Fe-4S]-[ferredoxin] + 2 ATP + 2 H2O. Its pathway is porphyrin-containing compound metabolism; chlorophyll biosynthesis (light-independent). Functionally, component of the dark-operative protochlorophyllide reductase (DPOR) that uses Mg-ATP and reduced ferredoxin to reduce ring D of protochlorophyllide (Pchlide) to form chlorophyllide a (Chlide). This reaction is light-independent. The NB-protein (ChlN-ChlB) is the catalytic component of the complex. This Prochlorococcus marinus (strain MIT 9312) protein is Light-independent protochlorophyllide reductase subunit N.